Consider the following 332-residue polypeptide: HPr kinase/phosphorylase (332 aa).

Active-site residues include His-153 and Lys-174. 168–175 (GKSGLGKS) provides a ligand contact to ATP. Position 175 (Ser-175) interacts with Mg(2+). Asp-192 (proton acceptor; for phosphorylation activity. Proton donor; for dephosphorylation activity) is an active-site residue. The segment at 217 to 226 (MEIRGLGVVD) is important for the catalytic mechanism of both phosphorylation and dephosphorylation. Glu-218 lines the Mg(2+) pocket. Arg-259 is a catalytic residue. The important for the catalytic mechanism of dephosphorylation stretch occupies residues 280-285 (PIFPGK).

The protein belongs to the HPrK/P family. As to quaternary structure, homohexamer. It depends on Mg(2+) as a cofactor.

The enzyme catalyses [HPr protein]-L-serine + ATP = [HPr protein]-O-phospho-L-serine + ADP + H(+). It catalyses the reaction [HPr protein]-O-phospho-L-serine + phosphate + H(+) = [HPr protein]-L-serine + diphosphate. In terms of biological role, catalyzes the ATP- as well as the pyrophosphate-dependent phosphorylation of a specific serine residue in HPr, a phosphocarrier protein of the phosphoenolpyruvate-dependent sugar phosphotransferase system (PTS). HprK/P also catalyzes the pyrophosphate-producing, inorganic phosphate-dependent dephosphorylation (phosphorolysis) of seryl-phosphorylated HPr (P-Ser-HPr). In Chlorobium luteolum (strain DSM 273 / BCRC 81028 / 2530) (Pelodictyon luteolum), this protein is HPr kinase/phosphorylase.